We begin with the raw amino-acid sequence, 1178 residues long: Leucine--tRNA ligase, cytoplasmic (1178 aa).

L-leucine-binding residues include tyrosine 54 and tyrosine 56. The 'HIGH' region signature appears at 62–65; the sequence is HLGH. Serine 169 carries the phosphoserine modification. The tract at residues 262–511 is editing domain; it reads GPQEYTLVKL…DAGDALIYME (250 aa). Positions 596 and 599 each coordinate L-leucine. Positions 718–722 match the 'KMSKS' region motif; sequence KMSKS. Residue lysine 721 participates in ATP binding. Serine 722 carries the post-translational modification Phosphoserine. N6-acetyllysine occurs at positions 972 and 1049.

It belongs to the class-I aminoacyl-tRNA synthetase family.

Its subcellular location is the cytoplasm. The catalysed reaction is tRNA(Leu) + L-leucine + ATP = L-leucyl-tRNA(Leu) + AMP + diphosphate. It catalyses the reaction L-methionyl-tRNA(Leu) + H2O = tRNA(Leu) + L-methionine + H(+). Its activity is regulated as follows. 5-fluoro-1,3-dihydro-1-hydroxy-1,2-benzoxaborole inhibits LARS1 by forming a covalent adduct with the 3' adenosine of tRNA(Leu) at the editing site, thus locking the enzyme in an inactive conformation. Functionally, aminoacyl-tRNA synthetase that catalyzes the specific attachment of leucine to its cognate tRNA (tRNA(Leu)). It performs tRNA aminoacylation in a two-step reaction: Leu is initially activated by ATP to form a leucyl-adenylate (Leu-AMP) intermediate; then the leucyl moiety is transferred to the acceptor 3' end of the tRNA to yield leucyl-tRNA. To improve the fidelity of catalytic reactions, it is also able to hydrolyze misactivated aminoacyl-adenylate intermediates (pre-transfer editing) and mischarged aminoacyl-tRNAs (post-transfer editing). The polypeptide is Leucine--tRNA ligase, cytoplasmic (Lars1) (Mus musculus (Mouse)).